The following is an 819-amino-acid chain: Aminopeptidase O (819 aa).

H479 provides a ligand contact to Zn(2+). E480 acts as the Proton acceptor in catalysis. Positions 483 and 502 each coordinate Zn(2+). Residues 689–699 (RRPRKRKRREK) carry the Nucleolar localization signal motif.

The protein belongs to the peptidase M1 family. Zn(2+) serves as cofactor.

The protein localises to the nucleus. It localises to the nucleolus. Its subcellular location is the cytoplasm. Aminopeptidase which catalyzes the hydrolysis of amino acid residues from the N-terminus of peptide or protein substrates. The protein is Aminopeptidase O of Homo sapiens (Human).